The sequence spans 1093 residues: Probable cellulose synthase A catalytic subunit 3 [UDP-forming] (1093 aa).

The Cytoplasmic segment spans residues 1–280; sequence MEASAGLVAG…PSSQINPYRM (280 aa). The Zn(2+) site is built by C39, C42, C58, C61, C66, C69, C81, and C84. The segment at 39-85 adopts an RING-type; degenerate zinc-finger fold; the sequence is CQICGDDVGLNPDGEPFVACNECAFPVCRDCYEYERREGTQNCPQCK. Basic and acidic residues predominate over residues 233–246; sequence LHQMRNDGGGKDWD. Residues 233 to 257 are disordered; it reads LHQMRNDGGGKDWDGDGDDGDLPLM. The chain crosses the membrane as a helical span at residues 281–301; it reads VIIIRLVVLGFFFHYRVMHPV. Topologically, residues 302-303 are extracellular; that stretch reads PD. Residues 304–324 form a helical membrane-spanning segment; that stretch reads AFALWLISVICEIWFAMSWIL. The Cytoplasmic portion of the chain corresponds to 325 to 869; that stretch reads DQFPKWFPIE…CLERFSYINS (545 aa). UDP-alpha-D-glucose contacts are provided by S363, K369, E370, and D399. The active site involves D399. Residues 453 to 480 adopt a coiled-coil conformation; sequence VRERRAMKREYEEFKVRINALVAKAQKV. K540 lines the UDP-alpha-D-glucose pocket. 2 residues coordinate Mn(2+): K541 and D565. The active site involves D793. A helical membrane pass occupies residues 870 to 890; that stretch reads IVYPFTSIPLLAYCTLPAICL. Residues 891–902 are Extracellular-facing; sequence LTGKFITPELTN. Residues 903–923 traverse the membrane as a helical segment; the sequence is VASLWFMSLFICIFATGILEM. Over 924–939 the chain is Cytoplasmic; sequence RWSGVGIDDWWRNEQF. A helical membrane pass occupies residues 940-960; the sequence is WVIGGVSSHLFALFQGLLKVI. Residues 961–988 lie on the Extracellular side of the membrane; sequence AGIDTSFTVTSKGGDDEEFSELYTFKWT. A helical membrane pass occupies residues 989–1009; that stretch reads TLLIPPTTLLLLNFIGVVAGV. Residues 1010 to 1020 lie on the Cytoplasmic side of the membrane; that stretch reads SNAINNGYESW. A helical membrane pass occupies residues 1021–1041; it reads GPLFGKLFFAFWVIVHLYPFL. Over 1042–1050 the chain is Extracellular; the sequence is KGLVGRQNR. A helical transmembrane segment spans residues 1051–1071; the sequence is TPTIVIVWSILLASIFSLLWV. The Cytoplasmic segment spans residues 1072–1093; the sequence is RIDPFLAKNDGPLLEECGLDCN.

The protein belongs to the glycosyltransferase 2 family. Plant cellulose synthase subfamily. Mn(2+) is required as a cofactor. The cofactor is Zn(2+).

Its subcellular location is the cell membrane. It carries out the reaction [(1-&gt;4)-beta-D-glucosyl](n) + UDP-alpha-D-glucose = [(1-&gt;4)-beta-D-glucosyl](n+1) + UDP + H(+). It functions in the pathway glycan metabolism; plant cellulose biosynthesis. Probable catalytic subunit of cellulose synthase terminal complexes ('rosettes'), required for beta-1,4-glucan microfibril crystallization, a major mechanism of the cell wall formation. The sequence is that of Probable cellulose synthase A catalytic subunit 3 [UDP-forming] (CESA3) from Oryza sativa subsp. japonica (Rice).